We begin with the raw amino-acid sequence, 293 residues long: Acetyl-coenzyme A carboxylase carboxyl transferase subunit beta (293 aa).

Residues 29–293 (LWVKCSECSQ…GVKELAEANT (265 aa)) enclose the CoA carboxyltransferase N-terminal domain. Residues C33, C36, C52, and C55 each coordinate Zn(2+). Residues 33–55 (CSECSQVAYRKDLISNFNVCSNC) form a C4-type zinc finger.

It belongs to the AccD/PCCB family. In terms of assembly, acetyl-CoA carboxylase is a heterohexamer composed of biotin carboxyl carrier protein (AccB), biotin carboxylase (AccC) and two subunits each of ACCase subunit alpha (AccA) and ACCase subunit beta (AccD). Zn(2+) is required as a cofactor.

The protein localises to the cytoplasm. The enzyme catalyses N(6)-carboxybiotinyl-L-lysyl-[protein] + acetyl-CoA = N(6)-biotinyl-L-lysyl-[protein] + malonyl-CoA. It participates in lipid metabolism; malonyl-CoA biosynthesis; malonyl-CoA from acetyl-CoA: step 1/1. Its function is as follows. Component of the acetyl coenzyme A carboxylase (ACC) complex. Biotin carboxylase (BC) catalyzes the carboxylation of biotin on its carrier protein (BCCP) and then the CO(2) group is transferred by the transcarboxylase to acetyl-CoA to form malonyl-CoA. The sequence is that of Acetyl-coenzyme A carboxylase carboxyl transferase subunit beta from Prochlorococcus marinus (strain MIT 9301).